A 540-amino-acid chain; its full sequence is Chaperonin GroEL (540 aa).

ATP contacts are provided by residues 29-32, 86-90, glycine 413, 476-478, and aspartate 492; these read TLGP, DGTTT, and NAA.

This sequence belongs to the chaperonin (HSP60) family. Forms a cylinder of 14 subunits composed of two heptameric rings stacked back-to-back. Interacts with the co-chaperonin GroES.

Its subcellular location is the cytoplasm. The enzyme catalyses ATP + H2O + a folded polypeptide = ADP + phosphate + an unfolded polypeptide.. Together with its co-chaperonin GroES, plays an essential role in assisting protein folding. The GroEL-GroES system forms a nano-cage that allows encapsulation of the non-native substrate proteins and provides a physical environment optimized to promote and accelerate protein folding. The protein is Chaperonin GroEL of Geobacillus thermodenitrificans (strain NG80-2).